The primary structure comprises 851 residues: MDIRKEYLEFFRSKGHEVISSMPLVPDDPTLMFTNAGMVQFKDIFTGAVPTPKNKRATSCQLCVRAGGKHNDLENVGYTARHHTLFEMLGNFSFGDYFKEDAIAYAWEFVTVNLALPIDKLWVTVHNNDDEAFDIWSKYINPSRIMRFGDKDNFWSMGDTGACGPCSEIFYDQGEENFNGEEDYMGGDGDRFLEIWNLVFMQYERTADGKLNPLPKPSIDTGMGLERVIAIKEGVFNNFDSSNFKPIIKKIEEISSKNATSENIGSYRVIADHLRACSFMLSQGILFGNEGRPYVLRRILRRAVRHGYLIGFRKPFMAKLLDTLIEIMGGHYTELVENKNFIEEQLTLEEDRFFKTIDLGMSLFNEELEKTKDIFSGVTAFKLYDTYGFPLDLTEDMLRDRGLKVDLAKFDELMNNQKAMAKAAWKGSGDTSNEGDFKQLLEKFGSNEFVGYNNTTYKSKIIALLDEHFKEVKILEKDSTGWVMLDKTPFYATSGGQNGDIGALEDNKHIAIVEETTKFHGLNLSKVKVVNSSLKQGESVDAIVVNRNEVAKHHSATHLLQSALKIVLGDTVSQAGSLNDASRLRFDFTYPKAMTKEQIDEVEDLVNSMIARGISGNVEELPIEQAKKKGAIAMFGEKYGDVVRVVSFEDVSVEFCGGTHVRNTADIGSFYIVKESGVSAGVRRIEAVCGTAAIKYTKDIISKMNEIQAEVKNSDVILGIKKLKEQIKDLKKEIETSQSKTSSPIEETIINDTKVIVSVVENGDLKKIVDDTKNANEKVAIFLLQAKDDKVLIVAGSKNTNIKAGDWIKNIAPIVGGGGGGRPDFAQAGGKDTSKIQEAKTKALDYAKENL.

Zn(2+) is bound by residues His-554, His-558, Cys-656, and His-660.

The protein belongs to the class-II aminoacyl-tRNA synthetase family. Requires Zn(2+) as cofactor.

It localises to the cytoplasm. The enzyme catalyses tRNA(Ala) + L-alanine + ATP = L-alanyl-tRNA(Ala) + AMP + diphosphate. Its function is as follows. Catalyzes the attachment of alanine to tRNA(Ala) in a two-step reaction: alanine is first activated by ATP to form Ala-AMP and then transferred to the acceptor end of tRNA(Ala). Also edits incorrectly charged Ser-tRNA(Ala) and Gly-tRNA(Ala) via its editing domain. The polypeptide is Alanine--tRNA ligase (Aliarcobacter butzleri (strain RM4018) (Arcobacter butzleri)).